A 173-amino-acid chain; its full sequence is Crossover junction endodeoxyribonuclease RuvC (173 aa).

Catalysis depends on residues Asp-8, Glu-67, and Asp-139. The Mg(2+) site is built by Asp-8, Glu-67, and Asp-139.

It belongs to the RuvC family. As to quaternary structure, homodimer which binds Holliday junction (HJ) DNA. The HJ becomes 2-fold symmetrical on binding to RuvC with unstacked arms; it has a different conformation from HJ DNA in complex with RuvA. In the full resolvosome a probable DNA-RuvA(4)-RuvB(12)-RuvC(2) complex forms which resolves the HJ. Mg(2+) is required as a cofactor.

It localises to the cytoplasm. It carries out the reaction Endonucleolytic cleavage at a junction such as a reciprocal single-stranded crossover between two homologous DNA duplexes (Holliday junction).. In terms of biological role, the RuvA-RuvB-RuvC complex processes Holliday junction (HJ) DNA during genetic recombination and DNA repair. Endonuclease that resolves HJ intermediates. Cleaves cruciform DNA by making single-stranded nicks across the HJ at symmetrical positions within the homologous arms, yielding a 5'-phosphate and a 3'-hydroxyl group; requires a central core of homology in the junction. The consensus cleavage sequence is 5'-(A/T)TT(C/G)-3'. Cleavage occurs on the 3'-side of the TT dinucleotide at the point of strand exchange. HJ branch migration catalyzed by RuvA-RuvB allows RuvC to scan DNA until it finds its consensus sequence, where it cleaves and resolves the cruciform DNA. The sequence is that of Crossover junction endodeoxyribonuclease RuvC from Aeromonas salmonicida (strain A449).